A 162-amino-acid chain; its full sequence is Transcription elongation factor GreA (162 aa).

Residues 9–38 are a coiled coil; it reads QGYKALEEELARLKSERPEIIQAIKEAREE.

It belongs to the GreA/GreB family.

In terms of biological role, necessary for efficient RNA polymerase transcription elongation past template-encoded arresting sites. The arresting sites in DNA have the property of trapping a certain fraction of elongating RNA polymerases that pass through, resulting in locked ternary complexes. Cleavage of the nascent transcript by cleavage factors such as GreA or GreB allows the resumption of elongation from the new 3'terminus. GreA releases sequences of 2 to 3 nucleotides. This is Transcription elongation factor GreA from Desulfovibrio desulfuricans (strain ATCC 27774 / DSM 6949 / MB).